A 394-amino-acid polypeptide reads, in one-letter code: Tryptophan synthase beta chain (394 aa).

Lysine 84 bears the N6-(pyridoxal phosphate)lysine mark.

The protein belongs to the TrpB family. Tetramer of two alpha and two beta chains. The cofactor is pyridoxal 5'-phosphate.

The catalysed reaction is (1S,2R)-1-C-(indol-3-yl)glycerol 3-phosphate + L-serine = D-glyceraldehyde 3-phosphate + L-tryptophan + H2O. The protein operates within amino-acid biosynthesis; L-tryptophan biosynthesis; L-tryptophan from chorismate: step 5/5. Its function is as follows. The beta subunit is responsible for the synthesis of L-tryptophan from indole and L-serine. In Clostridium acetobutylicum (strain ATCC 824 / DSM 792 / JCM 1419 / IAM 19013 / LMG 5710 / NBRC 13948 / NRRL B-527 / VKM B-1787 / 2291 / W), this protein is Tryptophan synthase beta chain.